The primary structure comprises 398 residues: MSNKLVLVLNCGSSSLKFAIIDALTGDDQISGLAECFGLEDAKIKWKVNGVKHDASLGAFSSHREAVEFIVKDVLGAHPEIASQIQAIGHRVVHGGEKFTQSVIIDESVVQGIEDCAALAPLHNPAHLIGIRAAQASFPQLPQVAVFDTAFHQTMPEKAFIYALPYKLYRENSIRRYGMHGTSHLFISREAAKAMGKNIEDSNIICAHLGNGASVTAIKGGKSVDTSMGMTPLEGLVMGTRCGDIDPSIIHHLVDRLGYTLDEVNNLMNKQSGLLGISELTNDCRGIEEGYSEGHKGATLALEIFCYRLAKYIASYTVPLGRLDAVVFTGGIGENSDLIRAKVLNLLEIFNFEVDDERNKAARFGNQGQITTDNGTIAMVIPTNEEWVIAEDAVRLLK.

A Mg(2+)-binding site is contributed by Asn-10. Lys-17 contacts ATP. Arg-91 contacts substrate. Asp-148 functions as the Proton donor/acceptor in the catalytic mechanism. ATP contacts are provided by residues 208-212 (HLGNG), 283-285 (DCR), and 331-335 (GIGEN). Glu-385 provides a ligand contact to Mg(2+).

The protein belongs to the acetokinase family. As to quaternary structure, homodimer. The cofactor is Mg(2+). Requires Mn(2+) as cofactor.

The protein localises to the cytoplasm. It carries out the reaction acetate + ATP = acetyl phosphate + ADP. The protein operates within metabolic intermediate biosynthesis; acetyl-CoA biosynthesis; acetyl-CoA from acetate: step 1/2. Its function is as follows. Catalyzes the formation of acetyl phosphate from acetate and ATP. Can also catalyze the reverse reaction. The chain is Acetate kinase from Shewanella woodyi (strain ATCC 51908 / MS32).